Reading from the N-terminus, the 445-residue chain is GTPase Der (445 aa).

2 EngA-type G domains span residues 3 to 167 and 180 to 353; these read PVIA…YADQ and IKIA…AAAM. Residues 9 to 16, 56 to 60, 119 to 122, 186 to 193, 233 to 237, and 298 to 301 contribute to the GTP site; these read GRPNVGKS, DTGGF, NKAE, DTAGL, and NKWD. Residues 354-438 form the KH-like domain; the sequence is AKLPTPKLTR…PLRIEFRSST (85 aa).

Belongs to the TRAFAC class TrmE-Era-EngA-EngB-Septin-like GTPase superfamily. EngA (Der) GTPase family. In terms of assembly, associates with the 50S ribosomal subunit.

In terms of biological role, GTPase that plays an essential role in the late steps of ribosome biogenesis. The protein is GTPase Der of Burkholderia multivorans (strain ATCC 17616 / 249).